The chain runs to 266 residues: HLA class II histocompatibility antigen, DRB1 beta chain (266 aa).

The first 29 residues, 1-29, serve as a signal peptide directing secretion; the sequence is MVCLKLPGGSCMTALTVTLMVLSSPLALS. Residues 30-124 form a beta-1 region; that stretch reads GDTRPRFLWQ…VESFTVQRRV (95 aa). Residues 30-227 are Extracellular-facing; it reads GDTRPRFLWQ…RARSESAQSK (198 aa). Cys-44 and Cys-108 are oxidised to a cystine. N-linked (GlcNAc...) asparagine glycosylation occurs at Asn-48. Asp-86, Trp-90, His-110, Asn-111, and Arg-122 together coordinate a peptide antigen. Residues 125–227 form a beta-2 region; it reads QPKVTVYPSK…RARSESAQSK (103 aa). In terms of domain architecture, Ig-like C1-type spans 126–214; sequence PKVTVYPSKT…EHPSVTSPLT (89 aa). The cysteines at positions 146 and 202 are disulfide-linked. Residues 228–248 traverse the membrane as a helical segment; it reads MLSGVGGFVLGLLFLGAGLFI. Residues 249 to 266 are Cytoplasmic-facing; it reads YFRNQKGHSGLQPTGFLS. Residue Lys-254 forms a Glycyl lysine isopeptide (Lys-Gly) (interchain with G-Cter in ubiquitin) linkage.

In terms of assembly, heterotrimer that consists of an alpha chain HLA-DRA, a beta chain HLA-DRB1 and a peptide (peptide-MHCII). Newly synthesized alpha and beta chains forms a heterodimer (MHCII) that associates with the CD74/invariant chain (Ii) in the endoplasmic reticulum (ER). Ii is a trimer composed of three subunits and each subunit interacts with one MHCII dimer, blocking the peptide-binding cleft. As a result, MHCII molecules cannot bind peptides present in the ER. The complex of MHCII and CD74/Ii is transported in vesicles from ER to Golgi to lysosomes, where it encounters antigenic peptides generated via proteolysis of endocytosed antigens. MHCII dimers are dissociated from CD74/Ii by the combined action of proteolysis and HLA-DM. Lysosomal enzymes such as cathepsin, degrade CD74/Ii leaving a 24 amino acid remnant called class II-associated Ii or CLIP. Interacts (via the peptide binding cleft) with CLIP; this interaction inhibits antigen peptide binding before entry in the endosomal compartment. The displacement of CLIP and replacement by a high affinity peptide in lysosomes is performed by HLA-DM heterodimer. HLA-DM catalyzes CLIP dissociation from MHCII, stabilizes empty MHCII and mediates the selection of high affinity peptides. Interacts with HLA-DM heterodimer; this interaction is direct. Interacts with TCR (via CDR3). Interacts (via beta-2 domain) with CD4 coreceptor (via Ig-like V-type domain); this interaction is of exceptionally low affinity yet necessary for optimal recognition of antigenic peptides. As to quaternary structure, (Microbial infection) Interacts with Staphylococcus aureus enterotoxin A/entA, enterotoxin B/entB, enterotoxin C1/entC1, enterotoxin D/entD and enterotoxin H/entH. Enterotoxins bind outside the peptide-binding cleft of MHCII: enterotoxin H/entH interacts via the beta-1 domain of MHCII and in a zinc-dependent way, whereas enterotoxin B/entB interacts primarily via the alpha-1 domain. (Microbial infection) Interacts with Epstein-Barr virus gp42 protein. Ubiquitinated by MARCHF1 and MARCHF8 at Lys-254 leading to sorting into the endosome system and down-regulation of MHCII. As to expression, expressed in professional APCs: monocyte/macrophages, dendritic cells and B cells (at protein level). Expressed in thymic epithelial cells (at protein level).

It localises to the cell membrane. The protein localises to the endoplasmic reticulum membrane. Its subcellular location is the lysosome membrane. The protein resides in the late endosome membrane. It is found in the autolysosome membrane. Its function is as follows. A beta chain of antigen-presenting major histocompatibility complex class II (MHCII) molecule. In complex with the alpha chain HLA-DRA, displays antigenic peptides on professional antigen presenting cells (APCs) for recognition by alpha-beta T cell receptor (TCR) on HLA-DRB1-restricted CD4-positive T cells. This guides antigen-specific T-helper effector functions, both antibody-mediated immune response and macrophage activation, to ultimately eliminate the infectious agents and transformed cells. Typically presents extracellular peptide antigens of 10 to 30 amino acids that arise from proteolysis of endocytosed antigens in lysosomes. In the tumor microenvironment, presents antigenic peptides that are primarily generated in tumor-resident APCs likely via phagocytosis of apoptotic tumor cells or macropinocytosis of secreted tumor proteins. Presents peptides derived from intracellular proteins that are trapped in autolysosomes after macroautophagy, a mechanism especially relevant for T cell selection in the thymus and central immune tolerance. The selection of the immunodominant epitopes follows two processing modes: 'bind first, cut/trim later' for pathogen-derived antigenic peptides and 'cut first, bind later' for autoantigens/self-peptides. The anchor residue at position 1 of the peptide N-terminus, usually a large hydrophobic residue, is essential for high affinity interaction with MHCII molecules. Functionally, allele DRB1*01:01: Displays an immunodominant epitope derived from Bacillus anthracis pagA/protective antigen, PA (KLPLYISNPNYKVNVYAVT), to both naive and PA-specific memory CD4-positive T cells. Presents immunodominant HIV-1 gag peptide (FRDYVDRFYKTLRAEQASQE) on infected dendritic cells for recognition by TRAV24-TRBV2 TCR on CD4-positive T cells and controls viral load. May present to T-helper 1 cells several HRV-16 epitopes derived from capsid proteins VP1 (PRFSLPFLSIASAYYMFYDG) and VP2 (PHQFINLRSNNSATLIVPYV), contributing to viral clearance. Displays commonly recognized peptides derived from IAV external protein HA (PKYVKQNTLKLAT and SNGNFIAPEYAYKIVK) and from internal proteins M, NP and PB1, with M-derived epitope (GLIYNRMGAVTTEV) being the most immunogenic. Presents a self-peptide derived from COL4A3 (GWISLWKGFSF) to TCR (TRAV14 biased) on CD4-positive, FOXP3-positive regulatory T cells and mediates immune tolerance to self. May present peptides derived from oncofetal trophoblast glycoprotein TPBG 5T4, known to be recognized by both T-helper 1 and regulatory T cells. Displays with low affinity a self-peptide derived from MBP (VHFFKNIVTPRTP). Allele DRB1*03:01: May present to T-helper 1 cells an HRV-16 epitope derived from capsid protein VP2 (NEKQPSDDNWLNFDGTLLGN), contributing to viral clearance. Displays self-peptides derived from retinal SAG (NRERRGIALDGKIKHE) and thyroid TG (LSSVVVDPSIRHFDV). Presents viral epitopes derived from HHV-6B gH/U48 and U85 antigens to polyfunctional CD4-positive T cells with cytotoxic activity implicated in control of HHV-6B infection. Presents several immunogenic epitopes derived from C.tetani neurotoxin tetX, playing a role in immune recognition and long-term protection. In terms of biological role, allele DRB1*04:01: Presents an immunodominant bacterial epitope derived from M.tuberculosis esxB/culture filtrate antigen CFP-10 (EISTNIRQAGVQYSR), eliciting CD4-positive T cell effector functions such as IFNG production and cytotoxic activity. May present to T-helper 1 cells an HRV-16 epitope derived from capsid protein VP2 (NEKQPSDDNWLNFDGTLLGN), contributing to viral clearance. Presents tumor epitopes derived from melanoma-associated TYR antigen (QNILLSNAPLGPQFP and DYSYLQDSDPDSFQD), triggering CD4-positive T cell effector functions such as GMCSF production. Displays preferentially citrullinated self-peptides derived from VIM (GVYATR/citSSAVR and SAVRAR/citSSVPGVR) and ACAN (VVLLVATEGR/ CitVRVNSAYQDK). Displays self-peptides derived from COL2A1. Its function is as follows. Allele DRB1*04:02: Displays native or citrullinated self-peptides derived from VIM. Functionally, allele DRB1*04:04: May present to T-helper 1 cells several HRV-16 epitopes derived from capsid proteins VP1 (HIVMQYMYVPPGAPIPTTRN) and VP2 (RGDSTITSQDVANAVVGYGV), contributing to viral clearance. Displays preferentially citrullinated self-peptides derived from VIM (SAVRAR/citSSVPGVR). Allele DRB1*04:05: May present to T-helper 1 cells an immunogenic epitope derived from tumor-associated antigen WT1 (KRYFKLSHLQMHSRKH), likely providing for effective antitumor immunity in a wide range of solid and hematological malignancies. In terms of biological role, allele DRB1*05:01: Presents an immunodominant HIV-1 gag peptide (FRDYVDRFYKTLRAEQASQE) on infected dendritic cells for recognition by TRAV24-TRBV2 TCR on CD4-positive T cells and controls viral load. Its function is as follows. Allele DRB1*07:01: Upon EBV infection, presents latent antigen EBNA2 peptide (PRSPTVFYNIPPMPLPPSQL) to CD4-positive T cells, driving oligoclonal expansion and selection of a dominant virus-specific memory T cell subset with cytotoxic potential to directly eliminate virus-infected B cells. May present to T-helper 1 cells several HRV-16 epitopes derived from capsid proteins VP1 (PRFSLPFLSIASAYYMFYDG) and VP2 (VPYVNAVPMDSMVRHNNWSL), contributing to viral clearance. In the context of tumor immunesurveillance, may present to T-helper 1 cells an immunogenic epitope derived from tumor-associated antigen WT1 (MTEYKLVVVGAVGVGKSALTIQLI), likely providing for effective antitumor immunity in a wide range of solid and hematological malignancies. In metastatic epithelial tumors, presents to intratumoral CD4-positive T cells a KRAS neoantigen (MTEYKLVVVGAVGVGKSALTIQLI) carrying G12V hotspot driver mutation and may mediate tumor regression. Functionally, allele DRB1*11:01: Displays an immunodominant HIV-1 gag peptide (FRDYVDRFYKTLRAEQASQE) on infected dendritic cells for recognition by TRAV24-TRBV2 TCR on CD4-positive T cells and controls viral load. May present to T-helper 1 cells an HRV-16 epitope derived from capsid protein VP2 (SDRIIQITRGDSTITSQDVA), contributing to viral clearance. Presents several immunogenic epitopes derived from C.tetani neurotoxin tetX, playing a role in immune recognition and longterm protection. In the context of tumor immunesurveillance, may present tumor-derived neoantigens to CD4-positive T cells and trigger anti-tumor helper functions. Allele DRB1*13:01: Presents viral epitopes derived from HHV-6B antigens to polyfunctional CD4-positive T cells implicated in control of HHV-6B infection. In terms of biological role, allele DRB1*15:01: May present to T-helper 1 cells an HRV-16 epitope derived from capsid protein VP2 (SNNSATLIVPYVNAVPMDSM), contributing to viral clearance. Displays a self-peptide derived from MBP (ENPVVHFFKNIVTPR). May present to T-helper 1 cells an immunogenic epitope derived from tumor-associated antigen WT1 (KRYFKLSHLQMHSRKH), likely providing for effective antitumor immunity in a wide range of solid and hematological malignancies. Its function is as follows. Allele DRB1*15:02: Displays an immunodominant HIV-1 gag peptide (FRDYVDRFYKTLRAEQASQE) on infected dendritic cells for recognition by TRAV24-TRBV2 TCR on CD4-positive T cells and controls viral load. May present to T-helper 1 cells an immunogenic epitope derived from tumor-associated antigen WT1 (KRYFKLSHLQMHSRKH), likely providing for effective antitumor immunity in a wide range of solid and hematological malignancies. Functionally, (Microbial infection) Acts as a receptor for Epstein-Barr virus on lymphocytes. The chain is HLA class II histocompatibility antigen, DRB1 beta chain from Homo sapiens (Human).